Reading from the N-terminus, the 311-residue chain is Mycothiol acetyltransferase (311 aa).

Residue Glu-35 coordinates 1D-myo-inositol 2-(L-cysteinylamino)-2-deoxy-alpha-D-glucopyranoside. Acetyl-CoA is bound at residue Leu-79–Val-81. The region spanning Val-155–Asp-311 is the N-acetyltransferase domain. 3 residues coordinate 1D-myo-inositol 2-(L-cysteinylamino)-2-deoxy-alpha-D-glucopyranoside: Glu-180, Lys-225, and Glu-235. Residues Leu-239–Val-241 and Gln-246–Gln-252 each bind acetyl-CoA. Tyr-278 provides a ligand contact to 1D-myo-inositol 2-(L-cysteinylamino)-2-deoxy-alpha-D-glucopyranoside. Asn-283–Arg-288 contacts acetyl-CoA.

This sequence belongs to the acetyltransferase family. MshD subfamily. In terms of assembly, monomer.

The enzyme catalyses 1D-myo-inositol 2-(L-cysteinylamino)-2-deoxy-alpha-D-glucopyranoside + acetyl-CoA = mycothiol + CoA + H(+). Functionally, catalyzes the transfer of acetyl from acetyl-CoA to desacetylmycothiol (Cys-GlcN-Ins) to form mycothiol. The polypeptide is Mycothiol acetyltransferase (Mycobacterium leprae (strain Br4923)).